A 530-amino-acid chain; its full sequence is Probable serine/threonine-protein kinase fnkB (530 aa).

Residues 11–268 (WEIVETLKSN…SITLIDHPFL (258 aa)) enclose the Protein kinase domain. ATP-binding positions include 17 to 25 (LKSNVFKVN) and K43. The Proton acceptor role is filled by D131.

The protein belongs to the protein kinase superfamily. STE Ser/Thr protein kinase family. Mg(2+) serves as cofactor.

It carries out the reaction L-seryl-[protein] + ATP = O-phospho-L-seryl-[protein] + ADP + H(+). The catalysed reaction is L-threonyl-[protein] + ATP = O-phospho-L-threonyl-[protein] + ADP + H(+). This Dictyostelium discoideum (Social amoeba) protein is Probable serine/threonine-protein kinase fnkB.